The sequence spans 147 residues: MAERNEQLERLAYEYQLLQAQAQLLAQNLELLTLGRNEFQAVKQTLEELKKVEDEKPEILVPIGAGSFLKGMIVDKNSAIVSVGSGYATEKSLDDAIGYLDARIKEYDEAIRKTQEALAKLEGQLQELAQKAQKLQQEAAMRFSVKE.

The protein belongs to the prefoldin alpha subunit family. As to quaternary structure, heterohexamer of two alpha and four beta subunits.

It is found in the cytoplasm. In terms of biological role, molecular chaperone capable of stabilizing a range of proteins. Seems to fulfill an ATP-independent, HSP70-like function in archaeal de novo protein folding. The polypeptide is Prefoldin subunit alpha (Thermococcus onnurineus (strain NA1)).